Consider the following 365-residue polypeptide: Prostaglandin E2 receptor EP3 subtype (365 aa).

The interval 1–22 is disordered; it reads MASMWAPEHSAEAHSNLSSTTD. Topologically, residues 1–30 are extracellular; it reads MASMWAPEHSAEAHSNLSSTTDDCGSVSVA. Residues 13-22 show a composition bias toward polar residues; sequence AHSNLSSTTD. The N-linked (GlcNAc...) asparagine glycan is linked to Asn-16. A helical membrane pass occupies residues 31-55; it reads FPITMMVTGFVGNALAMLLVSRSYR. Topologically, residues 56-68 are cytoplasmic; it reads RRESKRKKSFLLC. The helical transmembrane segment at 69–89 threads the bilayer; sequence IGWLALTDLVGQLLTSPVVIL. The Extracellular portion of the chain corresponds to 90–108; the sequence is VYLSQRRWEQLDPSGRLCT. Cys-107 and Cys-184 are oxidised to a cystine. The helical transmembrane segment at 109 to 130 threads the bilayer; that stretch reads FFGLTMTVFGLSSLLVASAMAV. At 131–151 the chain is on the cytoplasmic side; the sequence is ERALAIRAPHWYASHMKTRAT. The chain crosses the membrane as a helical span at residues 152 to 173; it reads PVLLGVWLSVLAFALLPVLGVG. Over 174–203 the chain is Extracellular; the sequence is RYSVQWPGTWCFISTGPAGNETDPAREPGS. Asn-193 carries N-linked (GlcNAc...) asparagine glycosylation. A helical membrane pass occupies residues 204–229; that stretch reads VAFASAFACLGLLALVVTFACNLATI. Residues 230 to 259 are Cytoplasmic-facing; sequence KALVSRCRAKAAVSQSSAQWGRITTETAIQ. The helical transmembrane segment at 260 to 283 threads the bilayer; sequence LMGIMCVLSVCWSPLLIMMLKMIF. The Extracellular segment spans residues 284–303; it reads NQMSVEQCKTQMGKEKECNS. A helical membrane pass occupies residues 304 to 325; that stretch reads FLIAVRLASLNQILDPWVYLLL. At 326 to 365 the chain is on the cytoplasmic side; sequence RKILLRKFCQIRDHTNYASSSTSLPCPGSSALMWSDQLER.

The protein belongs to the G-protein coupled receptor 1 family. In terms of assembly, interacts (via C-terminus) with MKLN1. In terms of processing, ligand binding is affected by cAMP-dependent phosphorylation in brain membranes. Detected in platelets. Kidney, uterus, and mastocytoma cells, and in a lesser amount in brain, thymus, lung, heart, stomach and spleen.

It localises to the cell membrane. In terms of biological role, receptor for prostaglandin E2 (PGE2). Required for normal development of fever in response to pyrinogens, including IL1B, prostaglandin E2 and bacterial lipopolysaccharide (LPS). Required for normal potentiation of platelet aggregation by prostaglandin E2, and thus plays a role in the regulation of blood coagulation. Required for increased HCO3(-) secretion in the duodenum in response to mucosal acidification, and thereby contributes to the protection of the mucosa against acid-induced ulceration. Not required for normal kidney function, normal urine volume and osmolality. Receptor for prostaglandin E2 (PGE2); ligand binding activates a signaling cascade via G(i) proteins that leads to inhibition of adenylate cyclase. Shows high agonist-independent constitutive inhibition of adenylate cyclase. Functionally, receptor for prostaglandin E2 (PGE2); ligand binding activates a signaling cascade via G(i) proteins that leads to inhibition of adenylate cyclase. Requires much higher ligand concentrations than isoform Alpha for activation. Does not display agonist-independent constitutive inhibition of adenylate cyclase. Its function is as follows. Receptor for prostaglandin E2 (PGE2); ligand binding can activate several distinct signaling cascades, resulting in activation or inhibition of adenylate cyclase. The chain is Prostaglandin E2 receptor EP3 subtype (Ptger3) from Mus musculus (Mouse).